Reading from the N-terminus, the 791-residue chain is Transient receptor potential cation channel subfamily V member 3 (791 aa).

Disordered stretches follow at residues 1-37, 52-71, and 76-113; these read MNAHSKEMAPLMGKRTTAPGGNPVVLTEKRPADLTPT, PNPTVTKTSPPIFSKPMDSN, and LSGNCDDMDSPQSPQDDVTETPSNPNSPSANLAKEEQR. Residues 1–430 are Cytoplasmic-facing; sequence MNAHSKEMAP…TLEPLHTLLH (430 aa). Positions 95-105 are enriched in polar residues; the sequence is ETPSNPNSPSA. 7 ANK repeats span residues 117-148, 170-198, 214-243, 261-291, 298-330, 340-362, and 398-420; these read KRLKKRIFAAVSEGCVEELRELLQDLQDLCRR, TCLMKALLNINPNTKEIVRILLAFAEEND, EGQTALNIAIERRQGDITAVLIAAGADVNA, FGETPLALAACTNQPEIVQLLMENEQTDITS, NILHALVTVAEDFKTQNDFVKRMYDMILLRSGN, DGLTPLQLAAKMGKAEILKYILS, and TTDNSVLEIIVYNTNIDNRHEML. The chain crosses the membrane as a helical span at residues 431–460; that stretch reads TKWKKFAKYMFFLSFCFYFFYNITLTLVSY. Over 461–479 the chain is Extracellular; sequence YRPREDEDLPHPLALTHKM. Residues 480–508 traverse the membrane as a helical segment; that stretch reads SWLQLLGRMFVLIWATCISVKEGIAIFLL. Residues 509–519 are Cytoplasmic-facing; the sequence is RPSDLQSILSD. Residues 520–540 form a helical membrane-spanning segment; the sequence is AWFHFVFFVQAVLVILSVFLY. The Extracellular segment spans residues 541–545; the sequence is LFAYK. A helical transmembrane segment spans residues 546 to 566; sequence EYLACLVLAMALGWANMLYYT. At 567-569 the chain is on the cytoplasmic side; that stretch reads RGF. The helical transmembrane segment at 570 to 608 threads the bilayer; it reads QSMGMYSVMIQKVILHDVLKFLFVYILFLLGFGVALASL. Residues 609-620 are Extracellular-facing; sequence IEKCSKDKKDCS. Residues 621–646 constitute an intramembrane region (pore-forming); it reads SYGSFSDAVLELFKLTIGLGDLNIQQ. G638 contacts Na(+). Over 647–649 the chain is Extracellular; it reads NST. A helical membrane pass occupies residues 650–686; it reads YPILFLFLLITYVILTFVLLLNMLIALMGETVENVSK. The Cytoplasmic segment spans residues 687-791; sequence ESERIWRLQR…ELDEFPETSV (105 aa).

The protein belongs to the transient receptor (TC 1.A.4) family. TrpV subfamily. TRPV3 sub-subfamily. As to quaternary structure, homotetramer. May convert from a homotetramer to a homopentamer to allow pore dilation. Interacts with TRPV1; may form a heteromeric channel with TRPV1. Interacts with SNX11; this interaction promotes TRPV3 trafficking from the cell membrane to lysosome for degradation. As to expression, expressed in keratinocytes and hair follicles.

The protein localises to the cell membrane. Its subcellular location is the cytoplasm. The protein resides in the lysosome. The catalysed reaction is Ca(2+)(in) = Ca(2+)(out). It carries out the reaction Mg(2+)(in) = Mg(2+)(out). The enzyme catalyses Na(+)(in) = Na(+)(out). It catalyses the reaction K(+)(in) = K(+)(out). With respect to regulation, activated by cannabinoid that binds to the vanilloid binding pocket. Diphenylboronic anhydride induces pore dilation and enhances cation permeability by promoting the conversion to a homopentamer. In terms of biological role, non-selective calcium permeant cation channel. It is activated by innocuous (warm) temperatures and shows an increased response at noxious temperatures greater than 39 degrees Celsius. Activation exhibits an outward rectification. The channel pore can dilate to provide permeability to larger cations. May associate with TRPV1 and may modulate its activity. Is a negative regulator of hair growth and cycling: TRPV3-coupled signaling suppresses keratinocyte proliferation in hair follicles and induces apoptosis and premature hair follicle regression (catagen). This chain is Transient receptor potential cation channel subfamily V member 3 (Trpv3), found in Mus musculus (Mouse).